Here is a 308-residue protein sequence, read N- to C-terminus: MKQVVIASRESPLAMWQAEHIRARLQALYPGLEVSILGITTQGDRILDKTLNKIGGKGLFVKELELAMQEGQADLAVHSIKDVPMDLPEGFALAAICEREDPRDAFVSSRYASLSELPAGAVVGTASLRRESQIRARYPHLLVKPLRGNLQTRLRKLDEGQYDAIILAASGLKRMGLAERIRMELSTADSLPAVGQGALGIEIRADRTDLMALLAPLNHPATYACVTAERAMGRALGASCQIPVGGYAEQHEHMLVMRGFVATPDGTTLLHAEATAPAEYADALGRTIAKKLLDQGADDVIDAVKAAG.

Cys240 bears the S-(dipyrrolylmethanemethyl)cysteine mark.

It belongs to the HMBS family. In terms of assembly, monomer. Dipyrromethane is required as a cofactor.

The catalysed reaction is 4 porphobilinogen + H2O = hydroxymethylbilane + 4 NH4(+). The protein operates within porphyrin-containing compound metabolism; protoporphyrin-IX biosynthesis; coproporphyrinogen-III from 5-aminolevulinate: step 2/4. In terms of biological role, tetrapolymerization of the monopyrrole PBG into the hydroxymethylbilane pre-uroporphyrinogen in several discrete steps. The polypeptide is Porphobilinogen deaminase (Laribacter hongkongensis (strain HLHK9)).